The following is a 426-amino-acid chain: Probable histidine--tRNA ligase (426 aa).

Belongs to the class-II aminoacyl-tRNA synthetase family. Homodimer.

The protein localises to the cytoplasm. The enzyme catalyses tRNA(His) + L-histidine + ATP = L-histidyl-tRNA(His) + AMP + diphosphate + H(+). The polypeptide is Probable histidine--tRNA ligase (hisS) (Tropheryma whipplei (strain TW08/27) (Whipple's bacillus)).